The chain runs to 273 residues: Phosphate import ATP-binding protein PstB (273 aa).

The region spanning 18 to 257 (ISLQNVTISY…EFDKTKKIFN (240 aa)) is the ABC transporter domain. Residue 50-57 (GPSGCGKS) coordinates ATP.

This sequence belongs to the ABC transporter superfamily. Phosphate importer (TC 3.A.1.7) family. The complex is composed of two ATP-binding proteins (PstB), two transmembrane proteins (PstC and PstA) and a solute-binding protein (PstS).

Its subcellular location is the cell inner membrane. It carries out the reaction phosphate(out) + ATP + H2O = ADP + 2 phosphate(in) + H(+). Functionally, part of the ABC transporter complex PstSACB involved in phosphate import. Responsible for energy coupling to the transport system. The polypeptide is Phosphate import ATP-binding protein PstB (Prochlorococcus marinus (strain SARG / CCMP1375 / SS120)).